Consider the following 119-residue polypeptide: MARSMKLACVVLAMCMLVAPMAEAAFSCATVMTDLRPCLTYLEAANNASPSPPCCAGVKNLQAAAPTVADRQAACNCLKSTAGAISNLNANNAAALPGKCGVNIPYKISASTNCNTIRF.

An N-terminal signal peptide occupies residues 1–24 (MARSMKLACVVLAMCMLVAPMAEA). Disulfide bonds link Cys-28/Cys-77, Cys-38/Cys-54, Cys-55/Cys-100, and Cys-75/Cys-114.

The protein belongs to the plant LTP family. In terms of tissue distribution, expressed in roots, stem, leaves and tendrils of the mature plant.

Functionally, plant non-specific lipid-transfer proteins transfer phospholipids as well as galactolipids across membranes. May play a role in wax or cutin deposition in the cell walls of expanding epidermal cells and certain secretory tissues. The polypeptide is Non-specific lipid-transfer protein 3 (Pisum sativum (Garden pea)).